Here is a 337-residue protein sequence, read N- to C-terminus: MVVQVGINGFGRIGRIVLRATESNKDVQVVAINDPFIPLDYMVYMLKYDTVHGRFDGSVEAKDGKLVVNGHAIAVSAERDPTSIPWGSAGADYVVESTGVFTTTEAASAHLKGGAKKVIISAPSADAPMFVCGVNLEAYKSEYKVISNASCTTNCLAPLAKVINDNFGIADGLMTTVHATTATQKTVDGPSHKDWRGGRAAAANIIPSSTGAAKAVGKVIPALNGKLTGMAFRVPTPDVSVVDLTVNLSKGASYDEIKQAIKKASETTMKGVLGYTSDAVVSSDFVGEVCSSVFDAAAGIQLTPTFVKLIAWYDNEYGYSNRVVDLLVHAAKVDGAL.

NAD(+) is bound by residues 12–13 (RI), Asp34, and Arg79. D-glyceraldehyde 3-phosphate contacts are provided by residues 150 to 152 (SCT), Thr181, 210 to 211 (TG), and Arg233. Cys151 (nucleophile) is an active-site residue. Asn315 provides a ligand contact to NAD(+).

Belongs to the glyceraldehyde-3-phosphate dehydrogenase family. Homotetramer.

The protein resides in the cytoplasm. The enzyme catalyses D-glyceraldehyde 3-phosphate + phosphate + NAD(+) = (2R)-3-phospho-glyceroyl phosphate + NADH + H(+). Its pathway is carbohydrate degradation; glycolysis; pyruvate from D-glyceraldehyde 3-phosphate: step 1/5. The sequence is that of Glyceraldehyde-3-phosphate dehydrogenase 1 (GPD1) from Mucor circinelloides f. lusitanicus (Mucor racemosus var. lusitanicus).